The following is a 362-amino-acid chain: Talin rod domain-containing protein 1 (362 aa).

Residues 1–27 (MASGSAGKPTGEAASPAPGSAVGGASS) are disordered. Ala-2 carries the N-acetylalanine modification. Over residues 9-27 (PTGEAASPAPGSAVGGASS) the composition is skewed to low complexity.

In terms of assembly, may homodimerize. Interacts with F-actin. Ubiquitous.

Functionally, actin-binding protein which may have an oncogenic function and regulates cell proliferation, migration and invasion in cancer cells. This is Talin rod domain-containing protein 1 from Mus musculus (Mouse).